The following is a 239-amino-acid chain: Large ribosomal subunit protein uL3 (239 aa).

Gln151 bears the N5-methylglutamine mark.

It belongs to the universal ribosomal protein uL3 family. In terms of assembly, part of the 50S ribosomal subunit. Forms a cluster with proteins L14 and L19. Post-translationally, methylated by PrmB.

In terms of biological role, one of the primary rRNA binding proteins, it binds directly near the 3'-end of the 23S rRNA, where it nucleates assembly of the 50S subunit. In Ruegeria sp. (strain TM1040) (Silicibacter sp.), this protein is Large ribosomal subunit protein uL3.